Consider the following 170-residue polypeptide: Keratin-associated protein 9-2 (170 aa).

A run of 17 repeats spans residues 8–12 (CCQPT), 13–17 (CCRTT), 18–22 (CCRTT), 37–41 (CCQPT), 42–46 (CCVSS), 51–55 (CCCPT), 61–65 (CCRTT), 66–70 (CCQPT), 75–79 (CYQPS), 80–84 (CCSTP), 85–89 (CCQPT), 90–94 (CCGSS), 95–99 (CCGQT), 140–144 (CCHPA), 145–149 (CCETT), 150–154 (CCRTT), and 164–168 (CCQPS). Positions 8–168 (CCQPTCCRTT…TCVSSCCQPS (161 aa)) are 17 X 5 AA repeats of C-C-[RQVSGE]-[SPTQ]-[TASP].

This sequence belongs to the KRTAP type 9 family. Interacts with hair keratins.

Functionally, in the hair cortex, hair keratin intermediate filaments are embedded in an interfilamentous matrix, consisting of hair keratin-associated proteins (KRTAP), which are essential for the formation of a rigid and resistant hair shaft through their extensive disulfide bond cross-linking with abundant cysteine residues of hair keratins. The matrix proteins include the high-sulfur and high-glycine-tyrosine keratins. The sequence is that of Keratin-associated protein 9-2 (KRTAP9-2) from Pan troglodytes (Chimpanzee).